Reading from the N-terminus, the 464-residue chain is ATP synthase subunit beta (464 aa).

Gly152–Thr159 serves as a coordination point for ATP.

This sequence belongs to the ATPase alpha/beta chains family. F-type ATPases have 2 components, CF(1) - the catalytic core - and CF(0) - the membrane proton channel. CF(1) has five subunits: alpha(3), beta(3), gamma(1), delta(1), epsilon(1). CF(0) has three main subunits: a(1), b(2) and c(9-12). The alpha and beta chains form an alternating ring which encloses part of the gamma chain. CF(1) is attached to CF(0) by a central stalk formed by the gamma and epsilon chains, while a peripheral stalk is formed by the delta and b chains.

It localises to the cell membrane. It catalyses the reaction ATP + H2O + 4 H(+)(in) = ADP + phosphate + 5 H(+)(out). Functionally, produces ATP from ADP in the presence of a proton gradient across the membrane. The catalytic sites are hosted primarily by the beta subunits. The chain is ATP synthase subunit beta from Ureaplasma parvum serovar 3 (strain ATCC 27815 / 27 / NCTC 11736).